A 168-amino-acid chain; its full sequence is uncharacterized protein (168 aa).

The HTH asnC-type domain maps to 19–80; it reads LDKLDRHILN…VVSPKAVGRT (62 aa). The H-T-H motif DNA-binding region spans 38-57; sequence LKELSEKVNSSVATCQRRVQ.

This is an uncharacterized protein from Haemophilus influenzae (strain ATCC 51907 / DSM 11121 / KW20 / Rd).